A 544-amino-acid chain; its full sequence is Glucose starvation modulator protein 1 (544 aa).

A DNA-binding region (zn(2)-C6 fungal-type) is located at residues 20-48; sequence CVFCHSKHLQCSNERPCKNCMKRNLGDQC. Residues 65 to 93 form a disordered region; it reads KKMKSRTNSISSSYRSPSVSESPQNPYTH. Residues 70–86 are compositionally biased toward low complexity; sequence RTNSISSSYRSPSVSES. A PAS domain is found at 403-475; the sequence is SLIDYEKLLL…FKLFKSVAVG (73 aa).

It belongs to the ERT1/acuK family.

Its subcellular location is the nucleus. In terms of biological role, transcription factor which regulates nonfermentable carbon utilization. The sequence is that of Glucose starvation modulator protein 1 (GSM1) from Debaryomyces hansenii (strain ATCC 36239 / CBS 767 / BCRC 21394 / JCM 1990 / NBRC 0083 / IGC 2968) (Yeast).